The chain runs to 968 residues: Isoleucine--tRNA ligase (968 aa).

Residues 68 to 78 carry the 'HIGH' region motif; that stretch reads PYANGALHMGH. E582 contacts L-isoleucyl-5'-AMP. The 'KMSKS' region motif lies at 623–627; sequence KMSKS. K626 contributes to the ATP binding site. Residues C936, C939, C956, and C959 each coordinate Zn(2+).

It belongs to the class-I aminoacyl-tRNA synthetase family. IleS type 1 subfamily. As to quaternary structure, monomer. Zn(2+) is required as a cofactor.

The protein resides in the cytoplasm. The catalysed reaction is tRNA(Ile) + L-isoleucine + ATP = L-isoleucyl-tRNA(Ile) + AMP + diphosphate. Functionally, catalyzes the attachment of isoleucine to tRNA(Ile). As IleRS can inadvertently accommodate and process structurally similar amino acids such as valine, to avoid such errors it has two additional distinct tRNA(Ile)-dependent editing activities. One activity is designated as 'pretransfer' editing and involves the hydrolysis of activated Val-AMP. The other activity is designated 'posttransfer' editing and involves deacylation of mischarged Val-tRNA(Ile). This is Isoleucine--tRNA ligase from Prochlorococcus marinus (strain MIT 9312).